The primary structure comprises 561 residues: Cytochrome P450 monooxygenase iboC (561 aa).

A helical membrane pass occupies residues 8 to 28 (RFYYQLLAAVLIPALFVAWAA). Cys484 lines the heme pocket.

This sequence belongs to the cytochrome P450 family. Requires heme as cofactor.

Its subcellular location is the membrane. Its pathway is secondary metabolite biosynthesis. Its function is as follows. Cytochrome P450 monooxygenase; part of the gene cluster that mediates the biosynthesis of the psychoactive metabolites ibotenic acid and muscimol. The first committed step is glutamate hydroxylation by the 2-oxoglutarate-dependent dioxygenase iboH, and the last step is decarboxylation of ibotenic acid to muscimol by the decarboxylase iboD. The order of the intermediate reactions is somewhat ambiguous. IboA likely activates the carboxylic acid at position 5 to introduce an amide bond, and the flavin monooxygenase iboF generates the N-O bond. There are several options for the latter step. One option is that iboF directly hydroxylates the amide nitrogen formed by iboA to produce a hydroxamic acid species. Another option is that iboF hydroxylates an external N-containing compound, whose resulting N-O bond is subsequently introduced into the hydroxyglutamate scaffold. The paralogous PLP-dependent cystathionine gamma-synthase-like enzymes iboG1 and iboG2 are likely involved in substitution of the OH group at position 3 by the O-N moiety. The first cyclic intermediate is most probably tricholomic acid which is likely desaturated to ibotenic acid by the cytochrome P450 monooxygenase iboC. The protein is Cytochrome P450 monooxygenase iboC of Amanita muscaria (strain Koide BX008).